Reading from the N-terminus, the 314-residue chain is Nerylneryl diphosphate synthase CPT2, chloroplastic (314 aa).

A chloroplast-targeting transit peptide spans 1-61 (MNSSIVSQHF…MSDRGLSKIS (61 aa)). Residue Asp97 is part of the active site.

The protein belongs to the UPP synthase family. Mg(2+) serves as cofactor. As to expression, expressed in stems. Expressed in petiolules. Expressed at low levels in leaf trichomes, old leaf and roots.

The protein resides in the plastid. It is found in the chloroplast. The enzyme catalyses 3 isopentenyl diphosphate + dimethylallyl diphosphate = nerylneryl diphosphate + 3 diphosphate. It carries out the reaction isopentenyl diphosphate + dimethylallyl diphosphate = neryl diphosphate + diphosphate. It catalyses the reaction neryl diphosphate + isopentenyl diphosphate = (2Z,6Z)-farnesyl diphosphate + diphosphate. The catalysed reaction is (2Z,6Z)-farnesyl diphosphate + isopentenyl diphosphate = nerylneryl diphosphate + diphosphate. Uses dimethylallyl diphosphate and isopentenyl diphosphate to catalyze the cis-prenyl chain elongation and produce the 20 carbon product nerylneryl diphosphate. This Solanum lycopersicum (Tomato) protein is Nerylneryl diphosphate synthase CPT2, chloroplastic.